A 236-amino-acid chain; its full sequence is MGSAESREGRRASFGMDEEERVRVLQGIRLSENVVNRMKEPGQPSRVGLLAPPAAALGPSGGREKDSKPPRPDCGSGRGPPRVQVDPLERCDWEQAVLQDELVRVATTEREAAASPRSVTLRRGEGGVDQEKQRLAQRARELESQEEELRCRDAFYKEQLGRLERQNLEAYRLSSQQFHEAATKIEGAIKPRRVEPVCSGLQAQILRCYRDRLQEVLLCADLVRAYQHCVSSAHKG.

Residues 1–11 (MGSAESREGRR) show a composition bias toward basic and acidic residues. Residues 1–22 (MGSAESREGRRASFGMDEEERV) form a disordered region. G2 carries the N-myristoyl glycine lipid modification. A phosphoserine mark is found at S13 and S31. Disordered stretches follow at residues 34–86 (VVNR…VQVD) and 109–132 (EREA…DQEK). Residues 48 to 58 (GLLAPPAAALG) show a composition bias toward low complexity. 2 stretches are compositionally biased toward basic and acidic residues: residues 62–71 (GREKDSKPPR) and 122–132 (RRGEGGVDQEK). A coiled-coil region spans residues 127-167 (GVDQEKQRLAQRARELESQEEELRCRDAFYKEQLGRLERQN). The 42-residue stretch at 195 to 236 (EPVCSGLQAQILRCYRDRLQEVLLCADLVRAYQHCVSSAHKG) folds into the CHCH domain. 2 consecutive short sequence motifs (cx9C motif) follow at residues 198 to 208 (CSGLQAQILRC) and 219 to 229 (CADLVRAYQHC). Disulfide bonds link C198–C229 and C208–C219.

Belongs to the MICOS complex subunit Mic19 family. Metazoan Mic25 subfamily. In terms of assembly, component of the mitochondrial contact site and cristae organizing system (MICOS) complex, composed of at least MICOS10/MIC10, CHCHD3/MIC19, CHCHD6/MIC25, APOOL/MIC27, IMMT/MIC60, APOO/MIC23/MIC26 and MICOS13/MIC13. This complex was also known under the names MINOS or MitOS complex. The MICOS complex associates with mitochondrial outer membrane proteins SAMM50, MTX1 and MTX2 (together described as components of the mitochondrial outer membrane sorting assembly machinery (SAM) complex) and DNAJC11, mitochondrial inner membrane protein TMEM11 and with HSPA9. The MICOS and SAM complexes together with DNAJC11 are part of a large protein complex spanning both membranes termed the mitochondrial intermembrane space bridging (MIB) complex. Interacts with DISC1. Interacts with IMMT/MIC60.

It is found in the mitochondrion inner membrane. The protein localises to the mitochondrion. Component of the MICOS complex, a large protein complex of the mitochondrial inner membrane that plays crucial roles in the maintenance of crista junctions, inner membrane architecture, and formation of contact sites to the outer membrane. This Bos taurus (Bovine) protein is MICOS complex subunit MIC25 (CHCHD6).